A 578-amino-acid polypeptide reads, in one-letter code: Proline--tRNA ligase (578 aa).

It belongs to the class-II aminoacyl-tRNA synthetase family. ProS type 1 subfamily. In terms of assembly, homodimer.

It localises to the cytoplasm. The enzyme catalyses tRNA(Pro) + L-proline + ATP = L-prolyl-tRNA(Pro) + AMP + diphosphate. In terms of biological role, catalyzes the attachment of proline to tRNA(Pro) in a two-step reaction: proline is first activated by ATP to form Pro-AMP and then transferred to the acceptor end of tRNA(Pro). As ProRS can inadvertently accommodate and process non-cognate amino acids such as alanine and cysteine, to avoid such errors it has two additional distinct editing activities against alanine. One activity is designated as 'pretransfer' editing and involves the tRNA(Pro)-independent hydrolysis of activated Ala-AMP. The other activity is designated 'posttransfer' editing and involves deacylation of mischarged Ala-tRNA(Pro). The misacylated Cys-tRNA(Pro) is not edited by ProRS. The polypeptide is Proline--tRNA ligase (Burkholderia thailandensis (strain ATCC 700388 / DSM 13276 / CCUG 48851 / CIP 106301 / E264)).